A 272-amino-acid polypeptide reads, in one-letter code: Protein MGF 110-11L (272 aa).

Residues 1-17 (MKVLLGLLLGYSVLILA) form a helical membrane-spanning segment. An N-linked (GlcNAc...) asparagine; by host glycan is attached at asparagine 68. Helical transmembrane passes span 129–149 (QFCL…CALC) and 156–176 (TTMK…PVLN). Asparagine 264 carries N-linked (GlcNAc...) asparagine; by host glycosylation.

It belongs to the asfivirus MGF 110 family.

The protein localises to the host membrane. Functionally, plays a role in virus cell tropism, and may be required for efficient virus replication in macrophages. The polypeptide is Protein MGF 110-11L (Ornithodoros (relapsing fever ticks)).